Here is a 111-residue protein sequence, read N- to C-terminus: Fluoride-specific ion channel FluC (111 aa).

The next 3 helical transmembrane spans lie at 2–22 (GLLL…RFAL), 36–56 (GILL…AFLI), and 71–91 (FLLV…SLDI). Positions 79 and 82 each coordinate Na(+).

It belongs to the fluoride channel Fluc/FEX (TC 1.A.43) family.

It localises to the cell inner membrane. It carries out the reaction fluoride(in) = fluoride(out). Na(+) is not transported, but it plays an essential structural role and its presence is essential for fluoride channel function. Functionally, fluoride-specific ion channel. Important for reducing fluoride concentration in the cell, thus reducing its toxicity. The chain is Fluoride-specific ion channel FluC from Francisella tularensis subsp. holarctica (strain FTNF002-00 / FTA).